Here is a 111-residue protein sequence, read N- to C-terminus: Probable 4-amino-4-deoxy-L-arabinose-phosphoundecaprenol flippase subunit ArnE (111 aa).

3 consecutive transmembrane segments (helical) span residues 38–58 (LWLGLALICMGAAMVLWLLVL), 61–81 (LPVGIAYPMLSLNFVWVTLAA), and 91–111 (PRHWLGVALIISGIIILGSAA). One can recognise an EamA domain in the interval 40-109 (LGLALICMGA…IISGIIILGS (70 aa)).

It belongs to the ArnE family. Heterodimer of ArnE and ArnF.

Its subcellular location is the cell inner membrane. It functions in the pathway bacterial outer membrane biogenesis; lipopolysaccharide biosynthesis. Functionally, translocates 4-amino-4-deoxy-L-arabinose-phosphoundecaprenol (alpha-L-Ara4N-phosphoundecaprenol) from the cytoplasmic to the periplasmic side of the inner membrane. This chain is Probable 4-amino-4-deoxy-L-arabinose-phosphoundecaprenol flippase subunit ArnE, found in Salmonella heidelberg (strain SL476).